Reading from the N-terminus, the 284-residue chain is Bifunctional protein FolD (284 aa).

Residues 166–168 and Ile-232 contribute to the NADP(+) site; that span reads GAS.

Belongs to the tetrahydrofolate dehydrogenase/cyclohydrolase family. As to quaternary structure, homodimer.

The enzyme catalyses (6R)-5,10-methylene-5,6,7,8-tetrahydrofolate + NADP(+) = (6R)-5,10-methenyltetrahydrofolate + NADPH. It catalyses the reaction (6R)-5,10-methenyltetrahydrofolate + H2O = (6R)-10-formyltetrahydrofolate + H(+). It functions in the pathway one-carbon metabolism; tetrahydrofolate interconversion. Functionally, catalyzes the oxidation of 5,10-methylenetetrahydrofolate to 5,10-methenyltetrahydrofolate and then the hydrolysis of 5,10-methenyltetrahydrofolate to 10-formyltetrahydrofolate. The polypeptide is Bifunctional protein FolD (Stutzerimonas stutzeri (strain A1501) (Pseudomonas stutzeri)).